We begin with the raw amino-acid sequence, 287 residues long: Endolytic peptidoglycan transglycosylase RlpA (287 aa).

The signal sequence occupies residues 1-25; it reads MKLKTGLNLTALLLFMISVAFPAQA. The 76-residue stretch at 209-284 folds into the SPOR domain; the sequence is LKGTEFYCLK…ANNKPLIVYT (76 aa).

Belongs to the RlpA family.

Its function is as follows. Lytic transglycosylase with a strong preference for naked glycan strands that lack stem peptides. This Haemophilus influenzae (strain ATCC 51907 / DSM 11121 / KW20 / Rd) protein is Endolytic peptidoglycan transglycosylase RlpA.